A 397-amino-acid polypeptide reads, in one-letter code: Pyruvate dehydrogenase E1 component subunit alpha, mitochondrial (397 aa).

The pyruvate site is built by His98, Tyr124, Arg125, Gly173, Val175, Asp204, Gly205, Ala206, Asn233, and Tyr235. Positions 124, 125, 173, 175, 204, 205, 206, and 233 each coordinate thiamine diphosphate. Position 204 (Asp204) interacts with Mg(2+). Mg(2+) contacts are provided by Asn233 and Tyr235. His299 serves as a coordination point for thiamine diphosphate.

As to quaternary structure, tetramer of 2 alpha and 2 beta subunits. It depends on thiamine diphosphate as a cofactor. Mg(2+) serves as cofactor.

It is found in the mitochondrion matrix. It catalyses the reaction N(6)-[(R)-lipoyl]-L-lysyl-[protein] + pyruvate + H(+) = N(6)-[(R)-S(8)-acetyldihydrolipoyl]-L-lysyl-[protein] + CO2. E1 activity is regulated by phosphorylation (inactivation) and dephosphorylation (activation) of the alpha subunit. In terms of biological role, the pyruvate dehydrogenase complex catalyzes the overall conversion of pyruvate to acetyl-CoA and CO(2). It contains multiple copies of three enzymatic components: pyruvate dehydrogenase (E1), dihydrolipoamide acetyltransferase (E2) and lipoamide dehydrogenase (E3). This chain is Pyruvate dehydrogenase E1 component subunit alpha, mitochondrial, found in Pisum sativum (Garden pea).